Here is a 256-residue protein sequence, read N- to C-terminus: Small ribosomal subunit protein uS2 (256 aa).

This sequence belongs to the universal ribosomal protein uS2 family.

This chain is Small ribosomal subunit protein uS2, found in Streptococcus equi subsp. equi (strain 4047).